Reading from the N-terminus, the 516-residue chain is Squalene epoxidase 4 (516 aa).

2 consecutive transmembrane segments (helical) span residues 2 to 22 (TYAW…FHLI) and 43 to 63 (ATDV…YALA). Residues 53-54 (VA), 73-74 (ER), Arg-81, Arg-153, Val-169, Asp-335, and Met-348 contribute to the FAD site. The helical transmembrane segment at 435-455 (ILGGMNPHPLTLVLHLVAITL) threads the bilayer.

It belongs to the squalene monooxygenase family. FAD serves as cofactor. In terms of tissue distribution, expressed mainly in seedlings and inflorescences.

It is found in the membrane. The catalysed reaction is squalene + reduced [NADPH--hemoprotein reductase] + O2 = (S)-2,3-epoxysqualene + oxidized [NADPH--hemoprotein reductase] + H2O + H(+). Its pathway is terpene metabolism; lanosterol biosynthesis; lanosterol from farnesyl diphosphate: step 2/3. Functionally, catalyzes the stereospecific oxidation of squalene to (S)-2,3-epoxysqualene, and is considered to be a rate-limiting enzyme in steroid biosynthesis. The protein is Squalene epoxidase 4 (SQE4) of Arabidopsis thaliana (Mouse-ear cress).